We begin with the raw amino-acid sequence, 340 residues long: Heat-inducible transcription repressor HrcA (340 aa).

It belongs to the HrcA family.

Its function is as follows. Negative regulator of class I heat shock genes (grpE-dnaK-dnaJ and groELS operons). Prevents heat-shock induction of these operons. This is Heat-inducible transcription repressor HrcA from Mycoplasma mycoides subsp. mycoides SC (strain CCUG 32753 / NCTC 10114 / PG1).